A 525-amino-acid polypeptide reads, in one-letter code: Beta-galactoside alpha-2,6-sialyltransferase 2 (525 aa).

The Cytoplasmic portion of the chain corresponds to 1–11 (MKPHLKQWRQR). Residues 12-32 (MLFAIFVWGLLFLAIFIYFTN) form a helical; Signal-anchor for type II membrane protein membrane-spanning segment. The Lumenal segment spans residues 33–525 (SNPAAPMPSS…PVTRPNNTNT (493 aa)). Disordered regions lie at residues 85 to 107 (SASPFNSWPGDPQKGDQAQDGFD) and 145 to 183 (RQGALGLPSPGESSWQSGPGQPKQEKLRHPRRGSLPEEA). 3 disulfides stabilise this stretch: Cys249–Cys515, Cys292–Cys444, and Cys462–Cys473. 2 N-linked (GlcNAc...) asparagine glycosylation sites follow: Asn303 and Asn333. Asn521 carries an N-linked (GlcNAc...) asparagine glycan.

Belongs to the glycosyltransferase 29 family.

The protein resides in the golgi apparatus. It localises to the golgi stack membrane. The enzyme catalyses a beta-D-galactoside + CMP-N-acetyl-beta-neuraminate = an N-acetyl-alpha-neuraminyl-(2-&gt;6)-beta-D-galactosyl derivative + CMP + H(+). Its function is as follows. Transfers sialic acid from the donor of substrate CMP-sialic acid to galactose containing acceptor substrates. Has alpha-2,6-sialyltransferase activity toward oligosaccharides that have the Gal-beta-1,4-GlcNAc sequence at the non-reducing end of their carbohydrate groups, but it has weak or no activities toward glycoproteins and glycolipids. The chain is Beta-galactoside alpha-2,6-sialyltransferase 2 (St6gal2) from Rattus norvegicus (Rat).